Here is a 1093-residue protein sequence, read N- to C-terminus: Regulator of nonsense transcripts 1 homolog (1093 aa).

Positions 42–79 (YGVYGGRGPRGNGRRRHDDDDNETEVLDDDDDESLASV) are disordered. The span at 61–75 (DDNETEVLDDDDDES) shows a compositional bias: acidic residues. Residues 95-252 (EKELPPHACA…AKLEEMWKEA (158 aa)) form the Upf1 CH-rich domain. 12 residues coordinate Zn(2+): cysteine 103, cysteine 106, cysteine 117, cysteine 120, cysteine 125, histidine 135, histidine 139, histidine 145, cysteine 163, cysteine 166, cysteine 189, and cysteine 193. The C3H stretch occupies residues 103–135 (CAYCGIHSPSSVVKCLTCNKWFCSAKGSAFSSH). A CC/SHH/C region spans residues 117 to 145 (CLTCNKWFCSAKGSAFSSHIVNHLVRARH). The tract at residues 163–193 (CYNCGTKNVFILGFIPAKSDTVVVLLCRQPC) is C4. ATP-binding positions include glutamine 460, 480 to 484 (GTGKT), glutamine 650, tyrosine 687, and glutamate 818.

The protein belongs to the DNA2/NAM7 helicase family.

The protein localises to the cytoplasm. The enzyme catalyses ATP + H2O = ADP + phosphate + H(+). In terms of biological role, RNA-dependent helicase required for nonsense-mediated decay (NMD) of aberrant mRNAs containing premature stop codons and modulates the expression level of normal mRNAs. Also capable of unwinding double-stranded DNA and translocating on single-stranded DNA. The sequence is that of Regulator of nonsense transcripts 1 homolog from Neurospora crassa (strain ATCC 24698 / 74-OR23-1A / CBS 708.71 / DSM 1257 / FGSC 987).